The chain runs to 391 residues: Formate-dependent phosphoribosylglycinamide formyltransferase (391 aa).

Residues 18–19 (EL) and Glu78 contribute to the N(1)-(5-phospho-beta-D-ribosyl)glycinamide site. ATP-binding positions include Arg110, Lys151, 156–161 (SSGKGQ), 191–194 (EEFI), and Glu199. The region spanning 115 to 305 (ELAAQQLGVR…EFELHLRAIL (191 aa)) is the ATP-grasp domain. The Mg(2+) site is built by Glu264 and Glu276. N(1)-(5-phospho-beta-D-ribosyl)glycinamide contacts are provided by residues Asp283, Lys353, and 360–361 (RR).

This sequence belongs to the PurK/PurT family. As to quaternary structure, homodimer.

It carries out the reaction N(1)-(5-phospho-beta-D-ribosyl)glycinamide + formate + ATP = N(2)-formyl-N(1)-(5-phospho-beta-D-ribosyl)glycinamide + ADP + phosphate + H(+). Its pathway is purine metabolism; IMP biosynthesis via de novo pathway; N(2)-formyl-N(1)-(5-phospho-D-ribosyl)glycinamide from N(1)-(5-phospho-D-ribosyl)glycinamide (formate route): step 1/1. Its function is as follows. Involved in the de novo purine biosynthesis. Catalyzes the transfer of formate to 5-phospho-ribosyl-glycinamide (GAR), producing 5-phospho-ribosyl-N-formylglycinamide (FGAR). Formate is provided by PurU via hydrolysis of 10-formyl-tetrahydrofolate. In Synechocystis sp. (strain ATCC 27184 / PCC 6803 / Kazusa), this protein is Formate-dependent phosphoribosylglycinamide formyltransferase.